The sequence spans 339 residues: DNA-directed RNA polymerase subunit alpha (339 aa).

Positions 1-235 (MTIQKNWQEL…DQLNVFVNFE (235 aa)) are alpha N-terminal domain (alpha-NTD). The alpha C-terminal domain (alpha-CTD) stretch occupies residues 251-339 (FNPAFLKKVD…ELAKRFEDHY (89 aa)).

Belongs to the RNA polymerase alpha chain family. As to quaternary structure, homodimer. The RNAP catalytic core consists of 2 alpha, 1 beta, 1 beta' and 1 omega subunit. When a sigma factor is associated with the core the holoenzyme is formed, which can initiate transcription.

The enzyme catalyses RNA(n) + a ribonucleoside 5'-triphosphate = RNA(n+1) + diphosphate. Its function is as follows. DNA-dependent RNA polymerase catalyzes the transcription of DNA into RNA using the four ribonucleoside triphosphates as substrates. This is DNA-directed RNA polymerase subunit alpha from Rhodopseudomonas palustris (strain ATCC BAA-98 / CGA009).